The sequence spans 288 residues: ATP synthase gamma chain (288 aa).

The protein belongs to the ATPase gamma chain family. In terms of assembly, F-type ATPases have 2 components, CF(1) - the catalytic core - and CF(0) - the membrane proton channel. CF(1) has five subunits: alpha(3), beta(3), gamma(1), delta(1), epsilon(1). CF(0) has three main subunits: a, b and c.

The protein localises to the cell inner membrane. In terms of biological role, produces ATP from ADP in the presence of a proton gradient across the membrane. The gamma chain is believed to be important in regulating ATPase activity and the flow of protons through the CF(0) complex. The protein is ATP synthase gamma chain of Blochmanniella pennsylvanica (strain BPEN).